The following is a 464-amino-acid chain: Alpha-amylase (464 aa).

The first 21 residues, 1–21 (MKNTAGILAIAGMLIAPLAHA), serve as a signal peptide directing secretion. Positions 107 and 213 each coordinate substrate. Catalysis depends on Asp215, which acts as the Nucleophile. Residue 218–219 (KH) coordinates substrate. Residue Glu242 is the Proton donor of the active site. 2 residues coordinate substrate: Gly247 and His313.

It belongs to the glycosyl hydrolase 13 family.

It localises to the secreted. The enzyme catalyses Endohydrolysis of (1-&gt;4)-alpha-D-glucosidic linkages in polysaccharides containing three or more (1-&gt;4)-alpha-linked D-glucose units.. The polypeptide is Alpha-amylase (Aeromonas hydrophila).